We begin with the raw amino-acid sequence, 230 residues long: Acyl-protein thioesterase 1 (230 aa).

Active-site charge relay system residues include Ser-119, Asp-174, and His-208. Lys-224 carries the N6-acetyllysine modification.

Belongs to the AB hydrolase superfamily. AB hydrolase 2 family. As to quaternary structure, homodimer. In terms of tissue distribution, ubiquitous. Detected at low levels in all tissues tested.

It localises to the cytoplasm. Its subcellular location is the cell membrane. It is found in the nucleus membrane. The protein localises to the endoplasmic reticulum. The catalysed reaction is S-hexadecanoyl-L-cysteinyl-[protein] + H2O = L-cysteinyl-[protein] + hexadecanoate + H(+). It catalyses the reaction 1-hexadecanoyl-sn-glycero-3-phosphocholine + H2O = sn-glycerol 3-phosphocholine + hexadecanoate + H(+). The enzyme catalyses a 1-(9Z-octadecenoyl)-2-acyl-sn-glycero-3-phosphocholine + H2O = a 2-acyl-sn-glycero-3-phosphocholine + (9Z)-octadecenoate + H(+). In terms of biological role, acts as an acyl-protein thioesterase. Hydrolyzes fatty acids from S-acylated cysteine residues in proteins such as trimeric G alpha proteins or HRAS. Acts as a palmitoyl thioesterase that catalyzes depalmitoylation of proteins, such as ADRB2, KCNMA1 and SQSTM1. Acts as a negative regulator of autophagy by mediating palmitoylation of SQSTM1, decreasing affinity between SQSTM1 and ATG8 proteins and recruitment of ubiquitinated cargo proteins to autophagosomes. Acts as a lysophospholipase and hydrolyzes lysophosphatidylcholine (lyso-PC). Also hydrolyzes lysophosphatidylethanolamine (lyso-PE), lysophosphatidylinositol (lyso-PI) and lysophosphatidylserine (lyso-PS). Has much higher thioesterase activity than lysophospholipase activity. Contributes to the production of lysophosphatidic acid (LPA) during blood coagulation by recognizing and cleaving plasma phospholipids to generate lysophospholipids which in turn act as substrates for ENPP2 to produce LPA. This is Acyl-protein thioesterase 1 (Lypla1) from Rattus norvegicus (Rat).